A 289-amino-acid polypeptide reads, in one-letter code: dTDP-rhamnosyl transferase RfbG (289 aa).

It belongs to the glycosyltransferase 2 family.

The protein operates within bacterial outer membrane biogenesis; lipopolysaccharide biosynthesis. The polypeptide is dTDP-rhamnosyl transferase RfbG (rfbG) (Shigella flexneri).